A 185-amino-acid polypeptide reads, in one-letter code: Large ribosomal subunit protein bL25 (185 aa).

The protein belongs to the bacterial ribosomal protein bL25 family. CTC subfamily. In terms of assembly, part of the 50S ribosomal subunit; part of the 5S rRNA/L5/L18/L25 subcomplex. Contacts the 5S rRNA. Binds to the 5S rRNA independently of L5 and L18.

Functionally, this is one of the proteins that binds to the 5S RNA in the ribosome where it forms part of the central protuberance. The sequence is that of Large ribosomal subunit protein bL25 from Microcystis aeruginosa (strain NIES-843 / IAM M-2473).